A 275-amino-acid polypeptide reads, in one-letter code: Phosphonoacetaldehyde hydrolase (275 aa).

Residue aspartate 15 is the Nucleophile of the active site. Residues aspartate 15 and alanine 17 each coordinate Mg(2+). Lysine 56 functions as the Schiff-base intermediate with substrate in the catalytic mechanism. Aspartate 189 contacts Mg(2+).

This sequence belongs to the HAD-like hydrolase superfamily. PhnX family. As to quaternary structure, homodimer. Requires Mg(2+) as cofactor.

The enzyme catalyses phosphonoacetaldehyde + H2O = acetaldehyde + phosphate + H(+). Its function is as follows. Involved in phosphonate degradation. In Pseudomonas putida (strain ATCC 700007 / DSM 6899 / JCM 31910 / BCRC 17059 / LMG 24140 / F1), this protein is Phosphonoacetaldehyde hydrolase.